The sequence spans 128 residues: MTGYTPDEKLRLQQLRELRRRWLKDQELSPREPVLPPQKMGPMEKFWNKFLENKSPWRKMVHGVYQKSIFVFTHVLVPVWIIHYYMKYHVSEKPYGIVEKKSRIFPGDTILETGEVIPPMKEFPDQHH.

Threonine 2 bears the N-acetylthreonine mark. Lysine 24 carries the N6-acetyllysine modification. Residues serine 68–methionine 86 form a helical membrane-spanning segment.

It belongs to the complex I NDUFB6 subunit family. Complex I is composed of 45 different subunits.

It localises to the mitochondrion inner membrane. Functionally, accessory subunit of the mitochondrial membrane respiratory chain NADH dehydrogenase (Complex I), that is believed not to be involved in catalysis. Complex I functions in the transfer of electrons from NADH to the respiratory chain. The immediate electron acceptor for the enzyme is believed to be ubiquinone. In Gorilla gorilla gorilla (Western lowland gorilla), this protein is NADH dehydrogenase [ubiquinone] 1 beta subcomplex subunit 6 (NDUFB6).